The chain runs to 426 residues: 3-phosphoshikimate 1-carboxyvinyltransferase (426 aa).

3-phosphoshikimate-binding residues include Lys-20, Ser-21, and Arg-25. Lys-20 is a phosphoenolpyruvate binding site. Phosphoenolpyruvate is bound by residues Gly-92 and Arg-120. Residues Ser-166, Gln-168, Asp-312, and Lys-339 each contribute to the 3-phosphoshikimate site. Residue Gln-168 coordinates phosphoenolpyruvate. Asp-312 acts as the Proton acceptor in catalysis. Arg-385 lines the phosphoenolpyruvate pocket.

This sequence belongs to the EPSP synthase family. Monomer.

It localises to the cytoplasm. The enzyme catalyses 3-phosphoshikimate + phosphoenolpyruvate = 5-O-(1-carboxyvinyl)-3-phosphoshikimate + phosphate. It participates in metabolic intermediate biosynthesis; chorismate biosynthesis; chorismate from D-erythrose 4-phosphate and phosphoenolpyruvate: step 6/7. In terms of biological role, catalyzes the transfer of the enolpyruvyl moiety of phosphoenolpyruvate (PEP) to the 5-hydroxyl of shikimate-3-phosphate (S3P) to produce enolpyruvyl shikimate-3-phosphate and inorganic phosphate. The polypeptide is 3-phosphoshikimate 1-carboxyvinyltransferase (Streptococcus suis (strain 98HAH33)).